The chain runs to 350 residues: GDSL esterase/lipase At2g04570 (350 aa).

The N-terminal stretch at 1–23 (MGHLKSLFTILFLIAMSSTVTFA) is a signal peptide. S35 acts as the Nucleophile in catalysis. N98 and N117 each carry an N-linked (GlcNAc...) asparagine glycan. Residues D325 and H328 contribute to the active site. N343 carries N-linked (GlcNAc...) asparagine glycosylation.

It belongs to the 'GDSL' lipolytic enzyme family.

The protein resides in the secreted. This chain is GDSL esterase/lipase At2g04570, found in Arabidopsis thaliana (Mouse-ear cress).